We begin with the raw amino-acid sequence, 241 residues long: Aliphatic sulfonates import ATP-binding protein SsuB (241 aa).

The region spanning V10–L226 is the ABC transporter domain. G42–T49 serves as a coordination point for ATP.

Belongs to the ABC transporter superfamily. Aliphatic sulfonates importer (TC 3.A.1.17.2) family. In terms of assembly, the complex is composed of two ATP-binding proteins (SsuB), two transmembrane proteins (SsuC) and a solute-binding protein (SsuA).

The protein resides in the cell inner membrane. It carries out the reaction ATP + H2O + aliphatic sulfonate-[sulfonate-binding protein]Side 1 = ADP + phosphate + aliphatic sulfonateSide 2 + [sulfonate-binding protein]Side 1.. In terms of biological role, part of the ABC transporter complex SsuABC involved in aliphatic sulfonates import. Responsible for energy coupling to the transport system. This is Aliphatic sulfonates import ATP-binding protein SsuB from Delftia acidovorans (Pseudomonas acidovorans).